The chain runs to 264 residues: Phosphonoacetaldehyde hydrolase (264 aa).

Residue Asp-9 is the Nucleophile of the active site. Mg(2+)-binding residues include Asp-9 and Ala-11. Lys-50 acts as the Schiff-base intermediate with substrate in catalysis. Asp-183 lines the Mg(2+) pocket.

This sequence belongs to the HAD-like hydrolase superfamily. PhnX family. In terms of assembly, homodimer. Mg(2+) is required as a cofactor.

The catalysed reaction is phosphonoacetaldehyde + H2O = acetaldehyde + phosphate + H(+). In terms of biological role, involved in phosphonate degradation. This Bacillus cereus protein is Phosphonoacetaldehyde hydrolase (phnX).